Consider the following 188-residue polypeptide: Ribosome-recycling factor (188 aa).

It belongs to the RRF family.

Its subcellular location is the cytoplasm. In terms of biological role, responsible for the release of ribosomes from messenger RNA at the termination of protein biosynthesis. May increase the efficiency of translation by recycling ribosomes from one round of translation to another. The polypeptide is Ribosome-recycling factor (Bradyrhizobium diazoefficiens (strain JCM 10833 / BCRC 13528 / IAM 13628 / NBRC 14792 / USDA 110)).